The chain runs to 123 residues: UPF0102 protein DR_2282 (123 aa).

Belongs to the UPF0102 family.

This is UPF0102 protein DR_2282 from Deinococcus radiodurans (strain ATCC 13939 / DSM 20539 / JCM 16871 / CCUG 27074 / LMG 4051 / NBRC 15346 / NCIMB 9279 / VKM B-1422 / R1).